A 220-amino-acid polypeptide reads, in one-letter code: Deoxyribose-phosphate aldolase (220 aa).

Asp89 acts as the Proton donor/acceptor in catalysis. Lys151 acts as the Schiff-base intermediate with acetaldehyde in catalysis. The active-site Proton donor/acceptor is Lys180.

This sequence belongs to the DeoC/FbaB aldolase family. DeoC type 1 subfamily.

The protein resides in the cytoplasm. It catalyses the reaction 2-deoxy-D-ribose 5-phosphate = D-glyceraldehyde 3-phosphate + acetaldehyde. It functions in the pathway carbohydrate degradation; 2-deoxy-D-ribose 1-phosphate degradation; D-glyceraldehyde 3-phosphate and acetaldehyde from 2-deoxy-alpha-D-ribose 1-phosphate: step 2/2. Its function is as follows. Catalyzes a reversible aldol reaction between acetaldehyde and D-glyceraldehyde 3-phosphate to generate 2-deoxy-D-ribose 5-phosphate. The chain is Deoxyribose-phosphate aldolase from Streptococcus sanguinis (strain SK36).